A 334-amino-acid chain; its full sequence is MAPEMNNKLSYGEKKRAYVTFLAGTGDYVKGVVGLAKGLRKTKSKYPLVVAVLPDVPADHRRQLLDQGCVIKEIQPVYPPDNQTQFAMAYYVLNYSKLRIWKFVEYSKLIYLDGDIQVFENIDHLFDLPDGNFYAVKDCFCEKTWSHTPQYKIGYCQQCPDKVTWPESELGPKPPLYFNAGMFVYEPSLPTYYNLLETLKVVPPTPFAEQDFLNMYFKDIYKPIPPVYNLVLAMLWRHPENIELNEAKVVHYCAAGAKPWRFTGQEGNMEREDIKMLVEKWWDIYNDESLDYKNFNVHCGQKEDVHRKPKTLPQFFTDLSEADVLQCAKAPSAA.

Residue K97 is part of the active site. D113, D115, and H251 together coordinate Mn(2+).

The protein belongs to the glycosyltransferase 8 family. Galactosyltransferase subfamily. Requires a divalent metal cation as cofactor.

It localises to the cytoplasm. It carries out the reaction myo-inositol + UDP-alpha-D-galactose = alpha-D-galactosyl-(1-&gt;3)-1D-myo-inositol + UDP + H(+). In terms of biological role, galactinol synthase involved in the biosynthesis of raffinose family oligosaccharides (RFOs) that function as osmoprotectants. May promote plant stress tolerance. The polypeptide is Galactinol synthase 3 (GOLS3) (Arabidopsis thaliana (Mouse-ear cress)).